The primary structure comprises 50 residues: Large ribosomal subunit protein bL33B (50 aa).

Belongs to the bacterial ribosomal protein bL33 family.

The protein is Large ribosomal subunit protein bL33B of Streptococcus pyogenes serotype M1.